Here is a 153-residue protein sequence, read N- to C-terminus: 3-hydroxyacyl-[acyl-carrier-protein] dehydratase FabZ (153 aa).

His53 is an active-site residue.

Belongs to the thioester dehydratase family. FabZ subfamily.

It is found in the cytoplasm. The enzyme catalyses a (3R)-hydroxyacyl-[ACP] = a (2E)-enoyl-[ACP] + H2O. Functionally, involved in unsaturated fatty acids biosynthesis. Catalyzes the dehydration of short chain beta-hydroxyacyl-ACPs and long chain saturated and unsaturated beta-hydroxyacyl-ACPs. This chain is 3-hydroxyacyl-[acyl-carrier-protein] dehydratase FabZ, found in Lawsonia intracellularis (strain PHE/MN1-00).